The chain runs to 41 residues: Large ribosomal subunit protein bL36 (41 aa).

The protein belongs to the bacterial ribosomal protein bL36 family.

The polypeptide is Large ribosomal subunit protein bL36 (Sphingopyxis alaskensis (strain DSM 13593 / LMG 18877 / RB2256) (Sphingomonas alaskensis)).